The chain runs to 209 residues: Ribosomal RNA large subunit methyltransferase E (209 aa).

The S-adenosyl-L-methionine site is built by Gly-63, Trp-65, Asp-83, Asp-99, and Asp-124. Residue Lys-164 is the Proton acceptor of the active site.

Belongs to the class I-like SAM-binding methyltransferase superfamily. RNA methyltransferase RlmE family.

The protein localises to the cytoplasm. It carries out the reaction uridine(2552) in 23S rRNA + S-adenosyl-L-methionine = 2'-O-methyluridine(2552) in 23S rRNA + S-adenosyl-L-homocysteine + H(+). Functionally, specifically methylates the uridine in position 2552 of 23S rRNA at the 2'-O position of the ribose in the fully assembled 50S ribosomal subunit. In Pseudoalteromonas atlantica (strain T6c / ATCC BAA-1087), this protein is Ribosomal RNA large subunit methyltransferase E.